The chain runs to 614 residues: Putative ankyrin repeat protein RBE_0997 (614 aa).

ANK repeat units follow at residues 3 to 32, 36 to 65, 69 to 98, 102 to 131, 135 to 164, 168 to 197, 201 to 231, 239 to 268, and 272 to 301; these read KDEELLIEAIENDDLKEVQKLLQEGVDPNI, DDKPCILSAIRNKNLDIVSVLLENGANPNA, DGEPIISAAIRTKRLDIINILLENRADPNL, RKNTILLKAIQSNNLDIVNAFLNKGANLNA, SGYPIFLKAIKSENLEIINALLEKGANPNL, DGSPLLFTAINTKNLDIIDALIKMGANVEA, DGNTVLNVLLERRGNVNIISLLIENSQDKEK, NGETFLHLAAQQGNSKIFDKYLDYYPTVNI, and AGYTPLYWSKLLGHTEISNKLIERAEELKE. A Glutamine amidotransferase type-1 domain is found at 348–580; the sequence is NVEDIDYRKI…VQSAETFMNK (233 aa). Residue C444 is the Nucleophile of the active site. Catalysis depends on residues H547 and E549.

This Rickettsia bellii (strain RML369-C) protein is Putative ankyrin repeat protein RBE_0997.